The primary structure comprises 131 residues: Holo-[acyl-carrier-protein] synthase (131 aa).

Mg(2+) is bound by residues Asp-8 and Glu-59.

This sequence belongs to the P-Pant transferase superfamily. AcpS family. The cofactor is Mg(2+).

It is found in the cytoplasm. It catalyses the reaction apo-[ACP] + CoA = holo-[ACP] + adenosine 3',5'-bisphosphate + H(+). In terms of biological role, transfers the 4'-phosphopantetheine moiety from coenzyme A to a Ser of acyl-carrier-protein. This chain is Holo-[acyl-carrier-protein] synthase, found in Orientia tsutsugamushi (strain Boryong) (Rickettsia tsutsugamushi).